The sequence spans 24 residues: Chlorate reductase subunit beta (24 aa).

Heterotrimer of alpha, beta and gamma subunits. It depends on [3Fe-4S] cluster as a cofactor. Requires [4Fe-4S] cluster as cofactor.

It is found in the cytoplasm. In terms of biological role, electron transfer subunit of the chlorate reductase. The sequence is that of Chlorate reductase subunit beta from Stutzerimonas chloritidismutans (Pseudomonas chloritidismutans).